The primary structure comprises 75 residues: Small ribosomal subunit protein bS18 (75 aa).

The protein belongs to the bacterial ribosomal protein bS18 family. In terms of assembly, part of the 30S ribosomal subunit. Forms a tight heterodimer with protein bS6.

Binds as a heterodimer with protein bS6 to the central domain of the 16S rRNA, where it helps stabilize the platform of the 30S subunit. This is Small ribosomal subunit protein bS18 from Histophilus somni (strain 129Pt) (Haemophilus somnus).